Here is a 406-residue protein sequence, read N- to C-terminus: Tryptophan synthase beta chain (406 aa).

Position 99 is an N6-(pyridoxal phosphate)lysine (K99).

It belongs to the TrpB family. Tetramer of two alpha and two beta chains. Requires pyridoxal 5'-phosphate as cofactor.

The catalysed reaction is (1S,2R)-1-C-(indol-3-yl)glycerol 3-phosphate + L-serine = D-glyceraldehyde 3-phosphate + L-tryptophan + H2O. It participates in amino-acid biosynthesis; L-tryptophan biosynthesis; L-tryptophan from chorismate: step 5/5. In terms of biological role, the beta subunit is responsible for the synthesis of L-tryptophan from indole and L-serine. The chain is Tryptophan synthase beta chain (trpB) from Agrobacterium fabrum (strain C58 / ATCC 33970) (Agrobacterium tumefaciens (strain C58)).